Here is a 311-residue protein sequence, read N- to C-terminus: ADP-L-glycero-D-manno-heptose-6-epimerase (311 aa).

Residues 10-11 (FI), 31-32 (DD), Lys-38, Lys-53, 75-79 (EGACS), and Asn-92 contribute to the NADP(+) site. Tyr-139 acts as the Proton acceptor in catalysis. Lys-143 is an NADP(+) binding site. Asn-174 contacts substrate. Positions 175 and 183 each coordinate NADP(+). Lys-183 functions as the Proton acceptor in the catalytic mechanism. Substrate-binding positions include Ser-185, His-192, 206–209 (FEGE), Arg-212, and Tyr-275.

The protein belongs to the NAD(P)-dependent epimerase/dehydratase family. HldD subfamily. In terms of assembly, homopentamer. Requires NADP(+) as cofactor.

It carries out the reaction ADP-D-glycero-beta-D-manno-heptose = ADP-L-glycero-beta-D-manno-heptose. Its pathway is nucleotide-sugar biosynthesis; ADP-L-glycero-beta-D-manno-heptose biosynthesis; ADP-L-glycero-beta-D-manno-heptose from D-glycero-beta-D-manno-heptose 7-phosphate: step 4/4. Its function is as follows. Catalyzes the interconversion between ADP-D-glycero-beta-D-manno-heptose and ADP-L-glycero-beta-D-manno-heptose via an epimerization at carbon 6 of the heptose. The protein is ADP-L-glycero-D-manno-heptose-6-epimerase of Psychromonas ingrahamii (strain DSM 17664 / CCUG 51855 / 37).